Consider the following 894-residue polypeptide: Eukaryotic translation initiation factor 3 subunit C (894 aa).

Disordered regions lie at residues 1-28 and 162-235; these read MSRFYRRGASDSDTDSSEDEVEELKANK and SDYR…VTKM. Composition is skewed to acidic residues over residues 12–22, 169–189, and 203–214; these read SDTDSSEDEVE, DEDGYETPEDENDEDDFEEVP, and SESESDSDDDDS. A compositionally biased stretch (polar residues) spans 215-224; sequence FNWSSEPDTN. The PCI domain maps to 625-801; that stretch reads YHMHINVELM…DCLIMHRVEP (177 aa). The segment at 824 to 894 is disordered; it reads QILEPRTGRG…RRHPQKPRAF (71 aa). A compositionally biased stretch (basic and acidic residues) spans 845 to 854; sequence RNERQGDKQK. The segment covering 855 to 870 has biased composition (gly residues); that stretch reads GSGGFQGERRGGPGGP. The segment covering 884 to 894 has biased composition (basic residues); the sequence is QRRHPQKPRAF.

It belongs to the eIF-3 subunit C family. Component of the eukaryotic translation initiation factor 3 (eIF-3) complex.

The protein resides in the cytoplasm. Functionally, component of the eukaryotic translation initiation factor 3 (eIF-3) complex, which is involved in protein synthesis of a specialized repertoire of mRNAs and, together with other initiation factors, stimulates binding of mRNA and methionyl-tRNAi to the 40S ribosome. The eIF-3 complex specifically targets and initiates translation of a subset of mRNAs involved in cell proliferation. This is Eukaryotic translation initiation factor 3 subunit C from Caenorhabditis briggsae.